The following is an 892-amino-acid chain: Microsomal triglyceride transfer protein homolog (892 aa).

The N-terminal stretch at 1–19 (MFSSRIWLLLAVTVGVCLA) is a signal peptide.

Heterodimer; heterodimerizes with protein disulfide isomerase.

The protein localises to the endoplasmic reticulum. Its function is as follows. Catalyzes the transport of cholesteryl ester, and phospholipid between phospholipid surfaces. Does not catalyze transport of triglycerides. Required for the assembly and secretion of plasma lipoproteins that contain apolipoprotein B. Required for normal expression of klf-3. In Caenorhabditis elegans, this protein is Microsomal triglyceride transfer protein homolog.